We begin with the raw amino-acid sequence, 1476 residues long: ABC transporter G family member 17 (1476 aa).

2 disordered regions span residues 13–45 (SENNNNNNNNNNNNNNNNNNNLNNNNDNDYDYD) and 68–91 (FREIDGGKNNNNHDIELGERKPEN). Residues 14–67 (ENNNNNNNNNNNNNNNNNNNLNNNNDNDYDYDSINNIEEKFENVSKELEGQSIK) are a coiled coil. Low complexity predominate over residues 15–39 (NNNNNNNNNNNNNNNNNNNLNNNND). One can recognise an ABC transporter 1 domain in the interval 151–402 (LNPFNYFKKD…FLDLGFDCEP (252 aa)). One can recognise an ABC transmembrane type-2 1 domain in the interval 507–751 (WGDKFTLTSR…SLSVKGENYL (245 aa)). A run of 5 helical transmembrane segments spans residues 517–537 (FLTILVLSFIFGGIYFQQPLT), 547–567 (AIFTSIIFNCILTQGELHGAL), 592–612 (ILIDIPFILVQVFLHSFIVYF), 623–643 (FFIFCFTLVGVSLSSASLFRG), and 764–784 (LNVVVIFLFWLFYIGLNLFAV). One can recognise an ABC transporter 2 domain in the interval 838–1082 (FSWKSISYTV…LTSYFERHGV (245 aa)). 874-881 (GSSGAGKT) lines the ATP pocket. 6 helical membrane passes run 1182–1202 (FYTMGSFAQSAVSGLVIGFTF), 1219–1239 (SWEAMILGVLLIYLVLPMFFI), 1260–1280 (LSMIAVEIPYVVLSSTLFFIA), 1298–1318 (WLMHTMFSVYIVSFAQALGAA), 1322–1342 (IAISIAALPIVLFYLFLLCGV), and 1450–1470 (FGIIVAYWGSSILAVLFFVYL). The 224-residue stretch at 1182-1405 (FYTMGSFAQS…TDCQTYSAPF (224 aa)) folds into the ABC transmembrane type-2 2 domain.

Belongs to the ABC transporter superfamily. ABCG family. PDR (TC 3.A.1.205) subfamily.

It localises to the membrane. The polypeptide is ABC transporter G family member 17 (abcG17-1) (Dictyostelium discoideum (Social amoeba)).